The following is an 89-amino-acid chain: Large ribosomal subunit protein eL34 (89 aa).

A disordered region spans residues 1 to 29; that stretch reads MSAPRFRNGTFKRTLKRVPGGRKVEHYKK. The span at 13-29 shows a compositional bias: basic residues; sequence RTLKRVPGGRKVEHYKK.

This sequence belongs to the eukaryotic ribosomal protein eL34 family.

The chain is Large ribosomal subunit protein eL34 from Methanosphaera stadtmanae (strain ATCC 43021 / DSM 3091 / JCM 11832 / MCB-3).